The primary structure comprises 167 residues: NAD(P)H-quinone oxidoreductase subunit I, chloroplastic (167 aa).

2 4Fe-4S ferredoxin-type domains span residues 55-84 and 95-124; these read GRIH…VDWK and LNYS…MTEE. Residues Cys64, Cys67, Cys70, Cys74, Cys104, Cys107, Cys110, and Cys114 each contribute to the [4Fe-4S] cluster site.

The protein belongs to the complex I 23 kDa subunit family. As to quaternary structure, NDH is composed of at least 16 different subunits, 5 of which are encoded in the nucleus. [4Fe-4S] cluster serves as cofactor.

Its subcellular location is the plastid. The protein resides in the chloroplast thylakoid membrane. It carries out the reaction a plastoquinone + NADH + (n+1) H(+)(in) = a plastoquinol + NAD(+) + n H(+)(out). The enzyme catalyses a plastoquinone + NADPH + (n+1) H(+)(in) = a plastoquinol + NADP(+) + n H(+)(out). NDH shuttles electrons from NAD(P)H:plastoquinone, via FMN and iron-sulfur (Fe-S) centers, to quinones in the photosynthetic chain and possibly in a chloroplast respiratory chain. The immediate electron acceptor for the enzyme in this species is believed to be plastoquinone. Couples the redox reaction to proton translocation, and thus conserves the redox energy in a proton gradient. The protein is NAD(P)H-quinone oxidoreductase subunit I, chloroplastic of Jasminum nudiflorum (Winter jasmine).